The chain runs to 312 residues: Ribonuclease H2 subunit B (312 aa).

Ala2 is subject to N-acetylalanine. The interval 236-256 is disordered; it reads EPSASLPNPPSKKIKLSDEPV. At Lys295 the chain carries N6-acetyllysine. The residue at position 296 (Ser296) is a Phosphoserine.

The protein belongs to the RNase H2 subunit B family. As to quaternary structure, the RNase H2 complex is a heterotrimer composed of the catalytic subunit RNASEH2A and the non-catalytic subunits RNASEH2B and RNASEH2C. As to expression, widely expressed.

The protein resides in the nucleus. Functionally, non catalytic subunit of RNase H2, an endonuclease that specifically degrades the RNA of RNA:DNA hybrids. Participates in DNA replication, possibly by mediating the removal of lagging-strand Okazaki fragment RNA primers during DNA replication. Mediates the excision of single ribonucleotides from DNA:RNA duplexes. This chain is Ribonuclease H2 subunit B (RNASEH2B), found in Homo sapiens (Human).